Here is a 296-residue protein sequence, read N- to C-terminus: Polyamine aminopropyltransferase (296 aa).

Residues 16-251 (HLWYFEYYTG…GMWSYTFASK (236 aa)) form the PABS domain. Q46 contributes to the S-methyl-5'-thioadenosine binding site. Residues H77 and D101 each contribute to the spermidine site. S-methyl-5'-thioadenosine contacts are provided by residues E121 and 152 to 153 (NG). Catalysis depends on D170, which acts as the Proton acceptor. Residue 170–173 (DSTD) participates in spermidine binding.

This sequence belongs to the spermidine/spermine synthase family. In terms of assembly, homotetramer.

It localises to the cytoplasm. It carries out the reaction S-adenosyl 3-(methylsulfanyl)propylamine + putrescine = S-methyl-5'-thioadenosine + spermidine + H(+). The protein operates within amine and polyamine biosynthesis; spermidine biosynthesis; spermidine from putrescine: step 1/1. Strongly inhibited by S-adenosyl-1,8-diamino-3-thiooctane. Functionally, catalyzes the irreversible transfer of a propylamine group from the amino donor S-adenosylmethioninamine (decarboxy-AdoMet) to putrescine (1,4-diaminobutane) to yield spermidine. It has lower affinity and lower activity towards 1,3-diaminopropane, cadaverine (1,5-diaminopentane), agmatine, norspermidine and spermidine (in vitro). This chain is Polyamine aminopropyltransferase, found in Thermotoga maritima (strain ATCC 43589 / DSM 3109 / JCM 10099 / NBRC 100826 / MSB8).